A 41-amino-acid chain; its full sequence is uncharacterized protein (41 aa).

The signal sequence occupies residues 1 to 23 (MNFLMRAIFSLLLLFTLSIPVIS).

This is an uncharacterized protein from Escherichia coli (strain K12).